We begin with the raw amino-acid sequence, 201 residues long: Small ribosomal subunit protein uS4c (201 aa).

Over residues Met-1 to Arg-14 the composition is skewed to basic residues. The disordered stretch occupies residues Met-1–Tyr-44. Positions Met-89–Leu-152 constitute an S4 RNA-binding domain.

Belongs to the universal ribosomal protein uS4 family. In terms of assembly, part of the 30S ribosomal subunit. Contacts protein S5. The interaction surface between S4 and S5 is involved in control of translational fidelity.

The protein resides in the plastid. It localises to the chloroplast. Functionally, one of the primary rRNA binding proteins, it binds directly to 16S rRNA where it nucleates assembly of the body of the 30S subunit. In terms of biological role, with S5 and S12 plays an important role in translational accuracy. The sequence is that of Small ribosomal subunit protein uS4c (rps4) from Draba nemorosa (Woodland whitlowgrass).